The primary structure comprises 1233 residues: Structural maintenance of chromosomes protein 1A (1233 aa).

Residue 32–39 (GPNGSGKS) participates in ATP binding. 2 coiled-coil regions span residues 104 to 124 (EYKI…LEKL) and 163 to 503 (ELAQ…KAEI). Basic and acidic residues predominate over residues 284–293 (IKEKDSELNQ). Disordered regions lie at residues 284-308 (IKEK…TSHK) and 348-369 (QEFE…TLEE). Residues Ser-358 and Ser-360 each carry the phosphoserine modification. One can recognise an SMC hinge domain in the interval 515-629 (VYGRLIDLCQ…DNVEDARRIA (115 aa)). Residues Lys-648 and Lys-713 each carry the N6-acetyllysine modification. Positions 667–935 (DEKAVDKLKE…RHNLLQACKM (269 aa)) form a coiled coil. The tract at residues 947–969 (MDDISQEEGSSQGEESVSGSQRT) is disordered. Residues 953–967 (EEGSSQGEESVSGSQ) are compositionally biased toward low complexity. 4 positions are modified to phosphoserine: Ser-957, Ser-962, Ser-966, and Ser-970. Residues 988-1068 (EDLKDAQAEE…FEQIKKERFD (81 aa)) adopt a coiled-coil conformation. At Lys-1037 the chain carries N6-acetyllysine.

It belongs to the SMC family. SMC1 subfamily. In terms of assembly, forms a heterodimer with SMC3 in cohesin complexes. Cohesin complexes are composed of the SMC1 (SMC1A or SMC1B) and SMC3 heterodimer attached via their SMC hinge domain, RAD21 which link them, and one STAG protein (STAG1, STAG2 or STAG3), which interacts with RAD21. In germ cell cohesin complexes, SMC1A is mutually exclusive with SMC1B. Interacts with STAG3. Found in a complex with CDCA5, SMC3 and RAD21, PDS5A/SCC-112 and PDS5B/APRIN. Found in a complex containing POLE and SMC3. Interacts with BRCA1, SYCP2, NDC80, RPGR and BRAT1. The cohesin complex interacts with the cohesin loading complex subunits NIPBL/Scc2 (via HEAT repeats) and MAU2/Scc4. NIPBL directly contacts all members of the complex, RAD21, SMC1A/B, SMC3 and STAG1. In terms of processing, phosphorylated upon ionizing radiation or DNA methylation. Phosphorylation of Ser-957 and Ser-966 activates it and is required for S-phase checkpoint activation. Post-translationally, ubiquitinated by the DCX(DCAF15) complex, leading to its degradation. In terms of tissue distribution, ubiquitous (at protein level).

The protein localises to the nucleus. It is found in the chromosome. The protein resides in the centromere. Its function is as follows. Involved in chromosome cohesion during cell cycle and in DNA repair. Involved in DNA repair via its interaction with BRCA1 and its related phosphorylation by ATM, and works as a downstream effector in the ATM/NBS1 branch of S-phase checkpoint. Central component of cohesin complex. The cohesin complex is required for the cohesion of sister chromatids after DNA replication. The cohesin complex apparently forms a large proteinaceous ring within which sister chromatids can be trapped. At anaphase, the complex is cleaved and dissociates from chromatin, allowing sister chromatids to segregate. The cohesin complex may also play a role in spindle pole assembly during mitosis. Involved in DNA repair via its interaction with BRCA1 and its related phosphorylation by ATM, or via its phosphorylation by ATR. Works as a downstream effector both in the ATM/NBS1 branch and in the ATR/MSH2 branch of S-phase checkpoint. This chain is Structural maintenance of chromosomes protein 1A (Smc1a), found in Mus musculus (Mouse).